The sequence spans 641 residues: Macrolide export ATP-binding/permease protein MacB (641 aa).

In terms of domain architecture, ABC transporter spans 2–236 (IFLKNICKNI…LTLKTMSKEK (235 aa)). Residue 34–41 (GQSGSGKT) coordinates ATP. 4 consecutive transmembrane segments (helical) span residues 265–285 (ILTM…VALG), 519–539 (ACVA…IMLV), 571–591 (MICT…IFAF), and 604–624 (AYSV…FGFF).

It belongs to the ABC transporter superfamily. Macrolide exporter (TC 3.A.1.122) family. In terms of assembly, homodimer.

Its subcellular location is the cell inner membrane. Functionally, non-canonical ABC transporter that contains transmembrane domains (TMD), which form a pore in the inner membrane, and an ATP-binding domain (NBD), which is responsible for energy generation. Confers resistance against macrolides. The protein is Macrolide export ATP-binding/permease protein MacB of Campylobacter jejuni subsp. jejuni serotype O:23/36 (strain 81-176).